Here is a 268-residue protein sequence, read N- to C-terminus: Ribosomal RNA small subunit methyltransferase A (268 aa).

Asn21, Leu23, Gly48, Glu69, Asp94, and Asn115 together coordinate S-adenosyl-L-methionine.

This sequence belongs to the class I-like SAM-binding methyltransferase superfamily. rRNA adenine N(6)-methyltransferase family. RsmA subfamily.

Its subcellular location is the cytoplasm. It carries out the reaction adenosine(1518)/adenosine(1519) in 16S rRNA + 4 S-adenosyl-L-methionine = N(6)-dimethyladenosine(1518)/N(6)-dimethyladenosine(1519) in 16S rRNA + 4 S-adenosyl-L-homocysteine + 4 H(+). Functionally, specifically dimethylates two adjacent adenosines (A1518 and A1519) in the loop of a conserved hairpin near the 3'-end of 16S rRNA in the 30S particle. May play a critical role in biogenesis of 30S subunits. The chain is Ribosomal RNA small subunit methyltransferase A from Saccharophagus degradans (strain 2-40 / ATCC 43961 / DSM 17024).